A 252-amino-acid chain; its full sequence is Triosephosphate isomerase (252 aa).

Residue 9–11 (NWK) coordinates substrate. Residue histidine 95 is the Electrophile of the active site. Glutamate 167 serves as the catalytic Proton acceptor. Residues glycine 173, serine 211, and 232 to 233 (GG) each bind substrate.

The protein belongs to the triosephosphate isomerase family. As to quaternary structure, homodimer.

It is found in the cytoplasm. The enzyme catalyses D-glyceraldehyde 3-phosphate = dihydroxyacetone phosphate. It participates in carbohydrate biosynthesis; gluconeogenesis. The protein operates within carbohydrate degradation; glycolysis; D-glyceraldehyde 3-phosphate from glycerone phosphate: step 1/1. Involved in the gluconeogenesis. Catalyzes stereospecifically the conversion of dihydroxyacetone phosphate (DHAP) to D-glyceraldehyde-3-phosphate (G3P). This Marinobacter nauticus (strain ATCC 700491 / DSM 11845 / VT8) (Marinobacter aquaeolei) protein is Triosephosphate isomerase.